Consider the following 118-residue polypeptide: Small ribosomal subunit protein uS13 (118 aa).

Residues 93 to 118 (KKLPVRGQRTKTNARTRKGPRKLMKK) form a disordered region.

This sequence belongs to the universal ribosomal protein uS13 family. In terms of assembly, part of the 30S ribosomal subunit. Forms a loose heterodimer with protein S19. Forms two bridges to the 50S subunit in the 70S ribosome.

Its function is as follows. Located at the top of the head of the 30S subunit, it contacts several helices of the 16S rRNA. In the 70S ribosome it contacts the 23S rRNA (bridge B1a) and protein L5 of the 50S subunit (bridge B1b), connecting the 2 subunits; these bridges are implicated in subunit movement. Contacts the tRNAs in the A and P-sites. The chain is Small ribosomal subunit protein uS13 from Buchnera aphidicola subsp. Baizongia pistaciae (strain Bp).